A 369-amino-acid chain; its full sequence is Cytochrome P450 monooxygenase apf8 (369 aa).

Residue cysteine 303 participates in heme binding.

It belongs to the cytochrome P450 family. Heme is required as a cofactor.

The protein operates within secondary metabolite biosynthesis. In terms of biological role, cytochrome P450 monooxygenase; part of the gene cluster that mediates the biosynthesis of the cyclic tetrapeptide apicidin F (APF). The non-ribosomal peptide synthetase apf1 incorporates four different amino acids to produce apicidin F: L-phenylalanine, D-pipecolic acid (D-pip), N-methoxy-L-tryptophan and L-2-aminooctanedioic acid. L-Phenylalanine is the only proteinogenic amino acid directly used by apf1. The 3 other apf1 substrates are non-proteinogenic and have to be modified by other enzymes of the cluster. Lysine is converted to delta-1-pyrroline-5-carboxylate (P5C) which is reduced to L-pipecolic acid (L-pip) by apf3. L-pip is epimerized to D-pip, probably by apf1 activity, prior to incorporation. L-Tryptophan is N-oxidyzed by one of the cytochrome P450 monooxygenases (apf7 or apf8), and further methylated at the hydroxy group by the O-methyltransferase apf6 to yield N-methoxy-L-tryptophan. The synthesis of the fourth apf1 substrate is more complex. The fatty acid synthase apf5 is involved in the synthesis of the octanoic acid backbone of L-2-aminooctanedioic acid by fixing one acetyl-CoA unit and three malonyl-CoA units. Then one of the cytochrome P450 monooxygenases (apf7 or apf8) may oxidize this backbone to 2-oxooctanoic acid. The aminotransferase apf4 is predicted to catalyze the exchange of the keto group with an amino group. The next step would be the oxidation of 2-aminooctanoic acid by one of the cytochrome P450 monooxygenases (apf7 or apf8). The last step is the oxidation of 2-amino-8-hydroxyoctanoic acid to 2-aminooctanedioic acid is catalyzed by the FAD-dependent monooxygenase apf9. This chain is Cytochrome P450 monooxygenase apf8, found in Gibberella fujikuroi (strain CBS 195.34 / IMI 58289 / NRRL A-6831) (Bakanae and foot rot disease fungus).